Here is a 168-residue protein sequence, read N- to C-terminus: I-Kappa-B like protein G2 (168 aa).

ANK repeat units follow at residues 56–88 (SQRQCVHIVVCEDKVNAIKKLKVLLEMGADING) and 93–123 (GGNTPLHLAVHSNNYKLVKWLCKQPSINKTA).

It belongs to the polydnaviridae I-Kappa-B-like protein family.

Suppresses the host immune response through NF-kappa-B inactivation. Possesses ankyrin repeat domains required for NF-kappa-B binding but lacks the regulatory regions required for dissociation from NF-kappa-B and degradation. Therefore, prevents host NF-kappa-B release and subsequent activation. This is I-Kappa-B like protein G2 (G4) from Microplitis demolitor (Parasitoid wasp).